Reading from the N-terminus, the 964-residue chain is Reticulon-3 (964 aa).

Residues 1-24 (MAESSAATQSPSVSSSSSGAEPSA) show a composition bias toward low complexity. Disordered stretches follow at residues 1-32 (MAES…GGSP), 68-109 (AGLS…SETL), and 179-200 (WVVK…DRSA). Position 2 is an N-acetylalanine (alanine 2). The Cytoplasmic segment spans residues 2 to 795 (AESSAATQSP…KKTGFVFGTT (794 aa)). Position 31 is a phosphoserine (serine 31). Residues 80–91 (SKSMTSSFLSSS) show a composition bias toward low complexity. A phosphoserine mark is found at serine 217, serine 225, serine 230, serine 233, serine 270, serine 303, and serine 429. The segment at 479–536 (ITEKPDSLPSAAAKTSEREIKETPSRETVRSEMCENSEQPQAQPETPTQKSLEGEVAS) is disordered. The segment covering 493–511 (TSEREIKETPSRETVRSEM) has biased composition (basic and acidic residues). The span at 516–527 (EQPQAQPETPTQ) shows a compositional bias: low complexity. Phosphoserine is present on serine 529. Phosphothreonine is present on threonine 593. A phosphoserine mark is found at serine 596, serine 597, and serine 673. 2 disordered regions span residues 645–674 (ELSG…TMSP) and 697–723 (VQDE…SSSD). Residues 712-723 (FAPQSGPQSSSD) show a composition bias toward polar residues. Positions 776–964 (VHDLIFWRDV…LPGIAKKKAE (189 aa)) constitute a Reticulon domain. The segment at residues 796–819 (LIMLLSLAAFSVISVVSYLILALL) is an intramembrane region (helical). The Cytoplasmic segment spans residues 820–876 (SVTISFRVYKSVIQAVQKSEEGHPFKAYLDVDITLSSEAFHNYMNAAMVHVNKALKL). Residues 877–899 (IIRLFLVEDLVDSLKLAVFMWLM) constitute an intramembrane region (helical). The Cytoplasmic portion of the chain corresponds to 900–903 (TYVG). Positions 904–926 (AVFNGITLLILAELLVFSVPIVY) form an intramembrane region, helical. Positions 919–964 (VFSVPIVYEKYKTQIDHYVGIARDQTKSIVEKIQAKLPGIAKKKAE) are interaction with FADD. Residues 927–964 (EKYKTQIDHYVGIARDQTKSIVEKIQAKLPGIAKKKAE) lie on the Cytoplasmic side of the membrane. Residues 932–934 (QID) form an interaction with BACE1 region.

In terms of assembly, homodimer. Interacts with RTN4. Isoform 3 interacts with BACE1, BACE2, BCL2 and FADD. Interacts with ATL1 and ATL2. Isoform 3 interacts with TMEM33. Interacts with ZFYVE27 and with KIF5A in a ZFYVE27-dependent manner. Interacts with RIGI. Interacts with TRIM25. As to expression, isoform 1, isoform 3, isoform 4 and isoform 5 are expressed in spinal cord. Isoform 1 is present in brain, where it is expressed in the neurons of cerebral cortex, hippocampus, hypothalamus and cerebellum (at protein level).

The protein localises to the endoplasmic reticulum membrane. It is found in the golgi apparatus membrane. May be involved in membrane trafficking in the early secretory pathway. Inhibits BACE1 activity and amyloid precursor protein processing. May induce caspase-8 cascade and apoptosis. May favor BCL2 translocation to the mitochondria upon endoplasmic reticulum stress. Induces the formation of endoplasmic reticulum tubules. Also acts as an inflammation-resolving regulator by interacting with both TRIM25 and RIGI, subsequently impairing RIGI 'Lys-63'-linked polyubiquitination leading to IRF3 and NF-kappa-B inhibition. The protein is Reticulon-3 (Rtn3) of Mus musculus (Mouse).